A 435-amino-acid polypeptide reads, in one-letter code: NADH-quinone oxidoreductase subunit D (435 aa).

The protein belongs to the complex I 49 kDa subunit family. As to quaternary structure, NDH-1 is composed of 14 different subunits. Subunits NuoB, C, D, E, F, and G constitute the peripheral sector of the complex.

The protein localises to the cell inner membrane. It carries out the reaction a quinone + NADH + 5 H(+)(in) = a quinol + NAD(+) + 4 H(+)(out). Functionally, NDH-1 shuttles electrons from NADH, via FMN and iron-sulfur (Fe-S) centers, to quinones in the respiratory chain. The immediate electron acceptor for the enzyme in this species is believed to be ubiquinone. Couples the redox reaction to proton translocation (for every two electrons transferred, four hydrogen ions are translocated across the cytoplasmic membrane), and thus conserves the redox energy in a proton gradient. This Xylella fastidiosa (strain 9a5c) protein is NADH-quinone oxidoreductase subunit D.